Reading from the N-terminus, the 457-residue chain is Serine--tRNA ligase (457 aa).

An L-serine-binding site is contributed by 252-254 (TAE). Residues 283 to 285 (RKE) and V299 contribute to the ATP site. E306 provides a ligand contact to L-serine. 370-373 (EMVS) is a binding site for ATP. T406 lines the L-serine pocket.

It belongs to the class-II aminoacyl-tRNA synthetase family. Type-1 seryl-tRNA synthetase subfamily. As to quaternary structure, homodimer. The tRNA molecule binds across the dimer.

It is found in the cytoplasm. It carries out the reaction tRNA(Ser) + L-serine + ATP = L-seryl-tRNA(Ser) + AMP + diphosphate + H(+). The catalysed reaction is tRNA(Sec) + L-serine + ATP = L-seryl-tRNA(Sec) + AMP + diphosphate + H(+). It functions in the pathway aminoacyl-tRNA biosynthesis; selenocysteinyl-tRNA(Sec) biosynthesis; L-seryl-tRNA(Sec) from L-serine and tRNA(Sec): step 1/1. Functionally, catalyzes the attachment of serine to tRNA(Ser). Is also able to aminoacylate tRNA(Sec) with serine, to form the misacylated tRNA L-seryl-tRNA(Sec), which will be further converted into selenocysteinyl-tRNA(Sec). The polypeptide is Serine--tRNA ligase (Saccharolobus solfataricus (strain ATCC 35092 / DSM 1617 / JCM 11322 / P2) (Sulfolobus solfataricus)).